We begin with the raw amino-acid sequence, 855 residues long: Coiled-coil domain-containing protein 87 (855 aa).

Disordered regions lie at residues 23-43 (LFPS…QDAT) and 278-302 (SRPS…PTSP). The span at 287–296 (PSHSPSSESH) shows a compositional bias: low complexity. 2 coiled-coil regions span residues 387 to 413 (TRRL…EASG) and 764 to 789 (RSYL…ESVF).

It belongs to the CCDC87 family. Specifically expressed in testis (at protein level). Not detected in other tissues tested (at protein level). In the testis, localizes to pachytene spermatocytes and spermatids.

Functionally, plays a role in spermatogenesis, where it is important for normal sperm head morphology. Also required for the acrosome reaction and thus normal male fertility. In Mus musculus (Mouse), this protein is Coiled-coil domain-containing protein 87 (Ccdc87).